The chain runs to 130 residues: Large ribosomal subunit protein bL17 (130 aa).

The protein belongs to the bacterial ribosomal protein bL17 family. In terms of assembly, part of the 50S ribosomal subunit. Contacts protein L32.

The protein is Large ribosomal subunit protein bL17 of Photorhabdus laumondii subsp. laumondii (strain DSM 15139 / CIP 105565 / TT01) (Photorhabdus luminescens subsp. laumondii).